Here is a 291-residue protein sequence, read N- to C-terminus: MFKGSMVAIVTPFKKGKIDEKAFEKLIEWHIKEGTHGIVPCGTTGEASTLDYEEHYKVIEITVKVVNKRIPVIAGTGSNSTDEAIMITKKAEKLGADAALLVTPYYNKPTQEGLYRHYKEIADKTGIPLILYNVPGRTSVNILPQTVARLAEHPRIVGIKEATGDMKQVSELIRLCGDKITVLSGDDFTNLTLLALGGKGAISVTANICPKDMAELFNAWEKGDIEHARKLHYKLEPLNKAMFIETNPIPVKTALAMMGKIKEEFRLPLCEMSQTNKEKLAEVLRSAGLIK.

Position 44 (Thr-44) interacts with pyruvate. The Proton donor/acceptor role is filled by Tyr-132. Lys-160 serves as the catalytic Schiff-base intermediate with substrate. A pyruvate-binding site is contributed by Ile-202.

Belongs to the DapA family. In terms of assembly, homotetramer; dimer of dimers.

The protein localises to the cytoplasm. The catalysed reaction is L-aspartate 4-semialdehyde + pyruvate = (2S,4S)-4-hydroxy-2,3,4,5-tetrahydrodipicolinate + H2O + H(+). Its pathway is amino-acid biosynthesis; L-lysine biosynthesis via DAP pathway; (S)-tetrahydrodipicolinate from L-aspartate: step 3/4. Its function is as follows. Catalyzes the condensation of (S)-aspartate-beta-semialdehyde [(S)-ASA] and pyruvate to 4-hydroxy-tetrahydrodipicolinate (HTPA). This Thermodesulfovibrio yellowstonii (strain ATCC 51303 / DSM 11347 / YP87) protein is 4-hydroxy-tetrahydrodipicolinate synthase.